The following is a 270-amino-acid chain: 4-hydroxy-tetrahydrodipicolinate reductase (270 aa).

Residues 11-16 (GCNGRM) and E37 contribute to the NAD(+) site. R38 serves as a coordination point for NADP(+). Residues 101 to 103 (GTT) and 125 to 128 (ASNY) each bind NAD(+). The active-site Proton donor/acceptor is the H158. H159 serves as a coordination point for (S)-2,3,4,5-tetrahydrodipicolinate. The active-site Proton donor is K162. A (S)-2,3,4,5-tetrahydrodipicolinate-binding site is contributed by 168 to 169 (GT).

Belongs to the DapB family.

It localises to the cytoplasm. It carries out the reaction (S)-2,3,4,5-tetrahydrodipicolinate + NAD(+) + H2O = (2S,4S)-4-hydroxy-2,3,4,5-tetrahydrodipicolinate + NADH + H(+). It catalyses the reaction (S)-2,3,4,5-tetrahydrodipicolinate + NADP(+) + H2O = (2S,4S)-4-hydroxy-2,3,4,5-tetrahydrodipicolinate + NADPH + H(+). Its pathway is amino-acid biosynthesis; L-lysine biosynthesis via DAP pathway; (S)-tetrahydrodipicolinate from L-aspartate: step 4/4. Functionally, catalyzes the conversion of 4-hydroxy-tetrahydrodipicolinate (HTPA) to tetrahydrodipicolinate. The polypeptide is 4-hydroxy-tetrahydrodipicolinate reductase (Aeromonas salmonicida (strain A449)).